The chain runs to 469 residues: MNNSEQFLSPRMGRVEQIHFVGIGGAGMCGIAEVLHNQGYRITGSDLGESGTVQRLRSLGIQVYIGHRLENIKGADVVVRSSAVDFNNPEIVAARELMIPVIPRAAMLAELMRFRHGIAIAGTHGKTTTTSLVSSLLAEGGLDPSFVIGGKLNSCGANAQLGKSAYFVVEADESDASFLFLKPMMAVVTNIDADHMDTYEGDFEKLRTTFLEFLHHLPFYGLAVVCLEDEEICRILPAIQRPTLTYGFKEEAHYRAINWTQKGMLSEFVVVRPAPHKQLTIQFQYPGRHNVLNALASIAIATELGVDDDSIVRGLQKFQGVGRRFQMLGEKQFEKGAAIIVDDYGHHPQEILSTIDAFRRVWPERRLVHVFQPHRYTRTQSLHRQFVDVLSLSDELLLMDIYAAGETAIPGVTSENLANEIRSRDKRVTIVSEQSLKATLDEFIKDGDVILMQGAGSIGQMAVNLMKNM.

ATP is bound at residue Gly-122–Thr-128.

The protein belongs to the MurCDEF family.

It is found in the cytoplasm. The catalysed reaction is UDP-N-acetyl-alpha-D-muramate + L-alanine + ATP = UDP-N-acetyl-alpha-D-muramoyl-L-alanine + ADP + phosphate + H(+). Its pathway is cell wall biogenesis; peptidoglycan biosynthesis. Functionally, cell wall formation. The chain is UDP-N-acetylmuramate--L-alanine ligase from Legionella pneumophila (strain Paris).